We begin with the raw amino-acid sequence, 274 residues long: Triosephosphate isomerase (274 aa).

Substrate is bound at residue 13 to 15 (NWK). The Electrophile role is filled by H98. The active-site Proton acceptor is E170. 2 residues coordinate substrate: G176 and S216.

This sequence belongs to the triosephosphate isomerase family. As to quaternary structure, homodimer.

It localises to the cytoplasm. The enzyme catalyses D-glyceraldehyde 3-phosphate = dihydroxyacetone phosphate. The protein operates within carbohydrate biosynthesis; gluconeogenesis. Its pathway is carbohydrate degradation; glycolysis; D-glyceraldehyde 3-phosphate from glycerone phosphate: step 1/1. Functionally, involved in the gluconeogenesis. Catalyzes stereospecifically the conversion of dihydroxyacetone phosphate (DHAP) to D-glyceraldehyde-3-phosphate (G3P). This Aster yellows witches'-broom phytoplasma (strain AYWB) protein is Triosephosphate isomerase.